The following is a 550-amino-acid chain: Rab GTPase-activating protein 22 (550 aa).

The segment at 1–49 (MKALRRSYTSTSSGNSSSSSSLPSSSSSSLPSSSSSSPPSSNSNSYSNS) is disordered. Residues 7-49 (SYTSTSSGNSSSSSSLPSSSSSSLPSSSSSSPPSSNSNSYSNS) show a composition bias toward low complexity. Residues 126–460 (GVDPSIRAEV…CLWEVMWADQ (335 aa)) form the Rab-GAP TBC domain.

As to quaternary structure, interacts with AGT1 in peroxisome under biotic stress conditions. As to expression, expressed in root meristems, vascular tissues, guard cells, trichomes, styles and receptacles.

The protein localises to the nucleus. It is found in the peroxisome. Functionally, involved in defense response against fungal and bacterial pathogens. Acts as a negative regulator of jasmonate (JA) responses during infection by the soil-born fungal pathogen Verticillium longisporum. Involved in abscisic acid-dependent stomata closure in response to infection by V.longisporum and Pseudomonas syringae. May be a downstream component of brassinosteroid-mediated signaling. This chain is Rab GTPase-activating protein 22, found in Arabidopsis thaliana (Mouse-ear cress).